The sequence spans 31 residues: U6-ctenitoxin-Co1a (31 aa).

2 cysteine pairs are disulfide-bonded: cysteine 2/cysteine 18 and cysteine 9/cysteine 23.

As to expression, expressed by the venom gland.

It localises to the secreted. Functionally, antagonist of L-type calcium channels (Cav1/CACNA1). The polypeptide is U6-ctenitoxin-Co1a (Ctenus ornatus (Brazilian spider)).